The sequence spans 827 residues: Carnosine synthase 1 (827 aa).

In terms of domain architecture, ATP-grasp spans 516–720 (GPPWPAPSLH…LLLAAVMVAC (205 aa)). Residue 542 to 611 (VHQVPLPGVM…MEFVEGTEHD (70 aa)) participates in ATP binding. Mg(2+) contacts are provided by glutamate 677, glutamate 689, and asparagine 691. Residues glutamate 677, glutamate 689, and asparagine 691 each coordinate Mn(2+).

In terms of assembly, homotetramer. Requires Mg(2+) as cofactor. The cofactor is Mn(2+).

It carries out the reaction beta-alanine + L-histidine + ATP = carnosine + ADP + phosphate + H(+). It catalyses the reaction 4-aminobutanoate + L-histidine + ATP = L-homocarnosine + ADP + phosphate + H(+). In terms of biological role, catalyzes the synthesis of carnosine and homocarnosine. Carnosine is synthesized more efficiently than homocarnosine. In Homo sapiens (Human), this protein is Carnosine synthase 1.